A 136-amino-acid chain; its full sequence is Putative nickel-responsive regulator (136 aa).

Ni(2+) is bound by residues His76, His87, His89, and Cys95.

The protein belongs to the transcriptional regulatory CopG/NikR family. Ni(2+) serves as cofactor.

Functionally, transcriptional regulator. The protein is Putative nickel-responsive regulator of Desulfotalea psychrophila (strain LSv54 / DSM 12343).